We begin with the raw amino-acid sequence, 2334 residues long: Centriolin (2334 aa).

The tract at residues methionine 1 to glutamine 70 is disordered. Low complexity predominate over residues proline 21 to leucine 38. 4 LRR repeats span residues lysine 126–leucine 147, arginine 148–cysteine 169, asparagine 170–lysine 191, and serine 194–lysine 215. The region spanning asparagine 228–arginine 266 is the LRRCT domain. Coiled-coil stretches lie at residues glutamate 265–threonine 343 and aspartate 437–valine 800. 2 disordered regions span residues aspartate 542 to glutamate 562 and serine 751 to glutamate 771. Serine 832 bears the Phosphoserine mark. Residues glutamate 858–leucine 1102 are a coiled coil. Disordered stretches follow at residues serine 1154 to alanine 1198, lysine 1213 to proline 1245, and leucine 1338 to aspartate 1360. Residues serine 1227–glutamate 1238 show a composition bias toward acidic residues. Residues glutamate 1320–aspartate 2169 adopt a coiled-coil conformation. The residue at position 1478 (serine 1478) is a Phosphoserine. The interval methionine 1951–arginine 2121 is required for centrosome localization. The segment at glutamine 1988 to histidine 2334 is sufficient for interaction with HOOK2. Positions threonine 2291–valine 2307 are enriched in low complexity. Positions threonine 2291 to histidine 2334 are disordered.

Interacts with HOOK2. Interacts with EXOC6 and SNAPIN. Associates with the exocyst complex. As to expression, highly expressed in liver.

The protein localises to the cytoplasm. Its subcellular location is the cytoskeleton. It localises to the microtubule organizing center. The protein resides in the centrosome. It is found in the midbody. The protein localises to the midbody ring. Involved in cell cycle progression and cytokinesis. During the late steps of cytokinesis, anchors exocyst and SNARE complexes at the midbody, thereby allowing secretory vesicle-mediated abscission. This is Centriolin (Cntrl) from Mus musculus (Mouse).